Here is a 528-residue protein sequence, read N- to C-terminus: MTDLAPLRRALLSVSDKTGLVALGKALAARGVELLSTGGTARALRDAGLEVKDVAEVTGFPEMMDGRVKTLHPAVHGGLLALRDNDDHLAAMQEHGIAGIDLVVVNLYPFEQTVAKGAQYDEVIENIDIGGPAMIRSAAKNHGFVSVVVDVEDYDVLIAQLEAYDGHTTYALRQRLAQTAYARTAAYDTAVSTWMAAQVGEPPRRRSFGGTLAQTLRYGENPHQDAAFYLDGSNSPGVATARQLQGKELSYNNINDTDAAFELVSEFDQGDGPACAIIKHANPCGVARAETLTEAYRRAFDCDRTSAFGGIIALNQPLDGATAEEISSIFTEVVIAPGADAEAQEVFAKKKNLRLLTTDGLADPTAPGLAIRQVSGGYLVQDRDTGRLSADALQIVTKRAPSDQEMADLMFAWTVAKHVKSNAIIYVKDGATVGVGAGQMSRVDSTRIAARKAQDMAEAMGLPAPLTQGSVVASDAFFPFADGLITAAEAGATALIQPGGSMRDDEVIAAADEAGLAMVFTGMRHFRH.

The region spanning 2–149 (TDLAPLRRAL…KNHGFVSVVV (148 aa)) is the MGS-like domain.

It belongs to the PurH family.

It catalyses the reaction (6R)-10-formyltetrahydrofolate + 5-amino-1-(5-phospho-beta-D-ribosyl)imidazole-4-carboxamide = 5-formamido-1-(5-phospho-D-ribosyl)imidazole-4-carboxamide + (6S)-5,6,7,8-tetrahydrofolate. It carries out the reaction IMP + H2O = 5-formamido-1-(5-phospho-D-ribosyl)imidazole-4-carboxamide. It participates in purine metabolism; IMP biosynthesis via de novo pathway; 5-formamido-1-(5-phospho-D-ribosyl)imidazole-4-carboxamide from 5-amino-1-(5-phospho-D-ribosyl)imidazole-4-carboxamide (10-formyl THF route): step 1/1. It functions in the pathway purine metabolism; IMP biosynthesis via de novo pathway; IMP from 5-formamido-1-(5-phospho-D-ribosyl)imidazole-4-carboxamide: step 1/1. The polypeptide is Bifunctional purine biosynthesis protein PurH (Roseobacter denitrificans (strain ATCC 33942 / OCh 114) (Erythrobacter sp. (strain OCh 114))).